The primary structure comprises 212 residues: MLANYTRSAKALSALLQREGVEDTQVLDAIAQIPRHIFVGDVLQHKAYQNTALPIGQGQTISQPYIVARMTELLQLAGVRDKVLEIGTGSGYQTAILAKIFTKVYSVERIKALQWQAKRRLHQLDLYNVAMKHGDGWQGWESQAPFNGIIVTAAAAKIPQDLLAQLADGGVLLAPIGEQEQKLTMVIRNGNNYTEHVIAPVRFVPLVAGDIE.

Residue Ser-62 is part of the active site.

This sequence belongs to the methyltransferase superfamily. L-isoaspartyl/D-aspartyl protein methyltransferase family.

It localises to the cytoplasm. The catalysed reaction is [protein]-L-isoaspartate + S-adenosyl-L-methionine = [protein]-L-isoaspartate alpha-methyl ester + S-adenosyl-L-homocysteine. Catalyzes the methyl esterification of L-isoaspartyl residues in peptides and proteins that result from spontaneous decomposition of normal L-aspartyl and L-asparaginyl residues. It plays a role in the repair and/or degradation of damaged proteins. The chain is Protein-L-isoaspartate O-methyltransferase from Pseudoalteromonas translucida (strain TAC 125).